A 1025-amino-acid chain; its full sequence is Retinoblastoma-related protein (1025 aa).

Residues 1 to 20 (MEDHPPKPSIPTADASLSNH) form a disordered region. The interval 422–623 (TPVTTAMTTA…EKGSSMYNSL (202 aa)) is domain A. Residues 422–875 (TPVTTAMTTA…NEIFIPAVKP (454 aa)) are pocket. Residues 624–744 (TVARPALSAE…PGAGGETCAE (121 aa)) form a spacer region. The interval 745-875 (TAINVFFSKI…NEIFIPAVKP (131 aa)) is domain B.

The protein belongs to the retinoblastoma protein (RB) family.

The protein resides in the nucleus. Regulator of biological processes that recruits a histone deacetylase to control gene transcription. May play a role in the entry into mitosis, negatively regulating the cell proliferation. Formation of stable complexes with geminiviridae replication-associated proteins may create a cellular environment which favors viral DNA replication. This Camellia sinensis (Tea plant) protein is Retinoblastoma-related protein (pRB).